Here is an 806-residue protein sequence, read N- to C-terminus: Ribonucleoside-diphosphate reductase large subunit-like protein (806 aa).

The protein belongs to the ribonucleoside diphosphate reductase large chain family.

It is found in the virion. The protein localises to the host cytoplasm. In terms of biological role, does not possess a ribonucleotide reductase activity. Betaherpesviruses probably use another strategy to expand the dNTP pool in a quiescent host cell. In Human herpesvirus 7 (strain JI) (HHV-7), this protein is Ribonucleoside-diphosphate reductase large subunit-like protein.